Here is a 489-residue protein sequence, read N- to C-terminus: E3 ubiquitin-protein ligase RGLG1 (489 aa).

Basic and acidic residues predominate over residues 1-10 (MGGGNSKEES). The interval 1–125 (MGGGNSKEES…SQSQVADRKK (125 aa)) is disordered. G2 is lipidated: N-myristoyl glycine. The span at 11–23 (SSPSSSSWASHQS) shows a compositional bias: low complexity. Pro residues predominate over residues 34 to 57 (YPPPPTYAPAPSPAPAPAPVPAPS). A compositionally biased stretch (low complexity) spans 58–75 (PASSYGPQYSQEGYASQP). Positions 76-88 (NNPPPPTYAPAPS) are enriched in pro residues. The VWFA domain occupies 156–376 (NLIVGIDFTK…KETEFALSAL (221 aa)). An RING-type zinc finger spans residues 446–479 (CPICLSNPKNMAFGCGHQTCCECGPDLKVCPICR).

Interacts with the heterodimer UBC35/UEV1B. Interacts with ERF053. Interacts with PP2CA. N-myristoylated. As to expression, ubiquitously expressed.

The protein localises to the cell membrane. Its subcellular location is the nucleus. It carries out the reaction S-ubiquitinyl-[E2 ubiquitin-conjugating enzyme]-L-cysteine + [acceptor protein]-L-lysine = [E2 ubiquitin-conjugating enzyme]-L-cysteine + N(6)-ubiquitinyl-[acceptor protein]-L-lysine.. In terms of biological role, E3 ubiquitin-protein ligase that mediates the formation of 'Lys-63'-linked ubiquitin chains. Regulates apical dominance by acting on the auxin transport proteins abundance. Together with RGLG5, mediates the ubiquitination and subsequent proteasomal degradation of the target protein PP2CA. Functions as a positive regulator of abscisic acid (ABA) signaling through ABA-dependent degradation of PP2CA, a major inhibitor of ABA signaling. Acts as a negative regulator of drought stress response. The protein is E3 ubiquitin-protein ligase RGLG1 of Arabidopsis thaliana (Mouse-ear cress).